The following is a 475-amino-acid chain: MNTVLAQQIANEGGVEAWMIAQQHKSLLRFLTCGSVDDGKSTLIGRLLHDTRQIYEDQLSSLHNDSKRHGTQGEKLDLALLVDGLQAEREQGITIDVAYRYFSTEKRKFIIADTPGHEQYTRNMATGASTCELAILLIDARKGVLDQTRRHSFISTLLGIKHLVVAINKMDLVDYSEETFTRIREDYLTFAGQLPGNLDIRFVPLSALEGDNVASQSESMPWYSGLTLLEVLETVEIQRVVDAQPMRFPVQYVNRPNLDFRGYAGMLASGRVEVGQRVKVLPSGVESNVARIVTFDGDREEVFAGEAITLVLTDEIDISRGDLLLAADEALPAVQSASVDVVWMAEQPLSPGQSYDIKIAGKKTRARVDGIRYQVDINNLTQREVENLPLNGIGLVDLTFDEPLVLDRYQQNPVTGGLIFIDRLSNVTVGAGMVHEPVSQATAASSEFSAFELELNALVRRHFPHWGARDLLGDK.

Positions 25–239 constitute a tr-type G domain; the sequence is KSLLRFLTCG…EVLETVEIQR (215 aa). Residues 34 to 41 form a G1 region; it reads GSVDDGKS. 34-41 contacts GTP; sequence GSVDDGKS. Residues 92–96 are G2; it reads GITID. Positions 113 to 116 are G3; the sequence is DTPG. Residues 113-117 and 168-171 contribute to the GTP site; these read DTPGH and NKMD. The tract at residues 168–171 is G4; the sequence is NKMD. Residues 206–208 form a G5 region; the sequence is SAL.

This sequence belongs to the TRAFAC class translation factor GTPase superfamily. Classic translation factor GTPase family. CysN/NodQ subfamily. As to quaternary structure, heterodimer composed of CysD, the smaller subunit, and CysN.

The catalysed reaction is sulfate + ATP + H(+) = adenosine 5'-phosphosulfate + diphosphate. The protein operates within sulfur metabolism; hydrogen sulfide biosynthesis; sulfite from sulfate: step 1/3. Its function is as follows. With CysD forms the ATP sulfurylase (ATPS) that catalyzes the adenylation of sulfate producing adenosine 5'-phosphosulfate (APS) and diphosphate, the first enzymatic step in sulfur assimilation pathway. APS synthesis involves the formation of a high-energy phosphoric-sulfuric acid anhydride bond driven by GTP hydrolysis by CysN coupled to ATP hydrolysis by CysD. This chain is Sulfate adenylyltransferase subunit 1, found in Shigella flexneri.